We begin with the raw amino-acid sequence, 294 residues long: Beta-lactamase (294 aa).

The N-terminal stretch at 1-27 is a signal peptide; it reads MFKKRGRQTVLIAAVLAFFTASSPLLA. S76 acts as the Acyl-ester intermediate in catalysis. The active-site Proton acceptor is the E174. 240-242 is a substrate binding site; it reads KTG.

It belongs to the class-A beta-lactamase family.

The catalysed reaction is a beta-lactam + H2O = a substituted beta-amino acid. This chain is Beta-lactamase, found in Citrobacter koseri (Citrobacter diversus).